Consider the following 180-residue polypeptide: N-terminal acetyltransferase B complex catalytic subunit naa20 (180 aa).

The N-acetyltransferase domain occupies 2–156 (TDTRKFKATD…DSFDMRKPLS (155 aa)).

This sequence belongs to the acetyltransferase family. Component of the N-terminal acetyltransferase B (NatB) complex.

Its subcellular location is the cytoplasm. The protein resides in the nucleus. The catalysed reaction is N-terminal L-methionyl-L-asparaginyl-[protein] + acetyl-CoA = N-terminal N(alpha)-acetyl-L-methionyl-L-asparaginyl-[protein] + CoA + H(+). The enzyme catalyses N-terminal L-methionyl-L-glutaminyl-[protein] + acetyl-CoA = N-terminal N(alpha)-acetyl-L-methionyl-L-glutaminyl-[protein] + CoA + H(+). It carries out the reaction N-terminal L-methionyl-L-aspartyl-[protein] + acetyl-CoA = N-terminal N(alpha)-acetyl-L-methionyl-L-aspartyl-[protein] + CoA + H(+). It catalyses the reaction N-terminal L-methionyl-L-glutamyl-[protein] + acetyl-CoA = N-terminal N(alpha)-acetyl-L-methionyl-L-glutamyl-[protein] + CoA + H(+). In terms of biological role, catalytic subunit of the NatB N-terminal acetyltransferase, which catalyzes acetylation of the amino-terminal methionine residues of all proteins beginning with Met-Asp or Met-Glu and of some proteins beginning with Met-Asn, Met-Gln or Met-Met. This is N-terminal acetyltransferase B complex catalytic subunit naa20 (naa20) from Schizosaccharomyces pombe (strain 972 / ATCC 24843) (Fission yeast).